A 669-amino-acid polypeptide reads, in one-letter code: Glutamate--cysteine ligase (669 aa).

Belongs to the glutamate--cysteine ligase type 3 family. Heterodimer of a catalytic heavy chain and a regulatory light chain.

The enzyme catalyses L-cysteine + L-glutamate + ATP = gamma-L-glutamyl-L-cysteine + ADP + phosphate + H(+). Its pathway is sulfur metabolism; glutathione biosynthesis; glutathione from L-cysteine and L-glutamate: step 1/2. Catalyzes the ATP-dependent ligation of L-glutamate and L-cysteine and participates in the first and rate-limiting step in glutathione biosynthesis. In Schizosaccharomyces pombe (strain 972 / ATCC 24843) (Fission yeast), this protein is Glutamate--cysteine ligase (gcs1).